A 129-amino-acid chain; its full sequence is RxLR effector protein PexRD43 (129 aa).

The first 16 residues, 1–16 (MRLAMILLSIPLFVSG), serve as a signal peptide directing secretion. A RxLR-dEER motif is present at residues 44-56 (RSLRTSGEANEER).

This sequence belongs to the RxLR effector family.

Its subcellular location is the secreted. The protein localises to the host cytoplasm. It localises to the host nucleus. Functionally, effector that enhances P.infestans colonization of Nicotiana benthamiana leaves. The polypeptide is RxLR effector protein PexRD43 (Phytophthora infestans (strain T30-4) (Potato late blight agent)).